Reading from the N-terminus, the 284-residue chain is 2-dehydro-3-deoxyphosphooctonate aldolase (284 aa).

Belongs to the KdsA family.

The protein localises to the cytoplasm. It catalyses the reaction D-arabinose 5-phosphate + phosphoenolpyruvate + H2O = 3-deoxy-alpha-D-manno-2-octulosonate-8-phosphate + phosphate. Its pathway is carbohydrate biosynthesis; 3-deoxy-D-manno-octulosonate biosynthesis; 3-deoxy-D-manno-octulosonate from D-ribulose 5-phosphate: step 2/3. The protein operates within bacterial outer membrane biogenesis; lipopolysaccharide biosynthesis. The chain is 2-dehydro-3-deoxyphosphooctonate aldolase from Erwinia tasmaniensis (strain DSM 17950 / CFBP 7177 / CIP 109463 / NCPPB 4357 / Et1/99).